We begin with the raw amino-acid sequence, 268 residues long: Small ribosomal subunit protein uS3 (268 aa).

The 69-residue stretch at 38–106 (IRKLLATGME…QVQLNILEVK (69 aa)) folds into the KH type-2 domain. The segment at 217-268 (NTAAPAGDRPRRERPSRPRRSGATGTTATSTEAGRAATATADAPATEQNQEG) is disordered. The segment covering 237-268 (SGATGTTATSTEAGRAATATADAPATEQNQEG) has biased composition (low complexity).

It belongs to the universal ribosomal protein uS3 family. In terms of assembly, part of the 30S ribosomal subunit. Forms a tight complex with proteins S10 and S14.

Its function is as follows. Binds the lower part of the 30S subunit head. Binds mRNA in the 70S ribosome, positioning it for translation. The chain is Small ribosomal subunit protein uS3 from Rhodococcus erythropolis (strain PR4 / NBRC 100887).